The primary structure comprises 394 residues: UPF0284 protein SYNW1869 (394 aa).

This sequence belongs to the UPF0284 family.

In Parasynechococcus marenigrum (strain WH8102), this protein is UPF0284 protein SYNW1869.